Here is a 121-residue protein sequence, read N- to C-terminus: Large ribosomal subunit protein uL18 (121 aa).

This sequence belongs to the universal ribosomal protein uL18 family. As to quaternary structure, part of the 50S ribosomal subunit; part of the 5S rRNA/L5/L18/L25 subcomplex. Contacts the 5S and 23S rRNAs.

Functionally, this is one of the proteins that bind and probably mediate the attachment of the 5S RNA into the large ribosomal subunit, where it forms part of the central protuberance. This chain is Large ribosomal subunit protein uL18, found in Anaplasma phagocytophilum (strain HZ).